A 218-amino-acid polypeptide reads, in one-letter code: Thiopurine S-methyltransferase (218 aa).

Residues Trp-10, Leu-45, Glu-66, and Arg-123 each coordinate S-adenosyl-L-methionine.

The protein belongs to the class I-like SAM-binding methyltransferase superfamily. TPMT family.

It is found in the cytoplasm. It carries out the reaction S-adenosyl-L-methionine + a thiopurine = S-adenosyl-L-homocysteine + a thiopurine S-methylether.. This chain is Thiopurine S-methyltransferase, found in Pseudomonas paraeruginosa (strain DSM 24068 / PA7) (Pseudomonas aeruginosa (strain PA7)).